The following is a 248-amino-acid chain: Flavodoxin/ferredoxin--NADP reductase (248 aa).

The 100-residue stretch at 2-101 folds into the FAD-binding FR-type domain; it reads ADWVTGKVTK…SEAAGFFVLD (100 aa). FAD contacts are provided by residues 50–53, Y66, 74–76, and T116; these read RAYS and KLS. NADP(+) is bound by residues 143–144, 173–174, R184, 214–216, and D220; these read AR, SR, and NPQ. 247 to 248 contacts FAD; sequence YW.

The protein belongs to the ferredoxin--NADP reductase type 1 family. FAD is required as a cofactor.

Its subcellular location is the cytoplasm. It catalyses the reaction 2 reduced [2Fe-2S]-[ferredoxin] + NADP(+) + H(+) = 2 oxidized [2Fe-2S]-[ferredoxin] + NADPH. It carries out the reaction reduced [flavodoxin] + NADP(+) = oxidized [flavodoxin] + NADPH + 2 H(+). Its function is as follows. Transports electrons between flavodoxin or ferredoxin and NADPH. This Shigella flexneri protein is Flavodoxin/ferredoxin--NADP reductase (fpr).